Consider the following 1036-residue polypeptide: Isoleucine--tRNA ligase (1036 aa).

The 'HIGH' region motif lies at 46–56 (PFATGLPHYGH). The short motif at 589-593 (KMSKR) is the 'KMSKS' region element. Lys592 provides a ligand contact to ATP.

It belongs to the class-I aminoacyl-tRNA synthetase family. IleS type 2 subfamily. As to quaternary structure, monomer. The cofactor is Zn(2+).

Its subcellular location is the cytoplasm. The enzyme catalyses tRNA(Ile) + L-isoleucine + ATP = L-isoleucyl-tRNA(Ile) + AMP + diphosphate. In terms of biological role, catalyzes the attachment of isoleucine to tRNA(Ile). As IleRS can inadvertently accommodate and process structurally similar amino acids such as valine, to avoid such errors it has two additional distinct tRNA(Ile)-dependent editing activities. One activity is designated as 'pretransfer' editing and involves the hydrolysis of activated Val-AMP. The other activity is designated 'posttransfer' editing and involves deacylation of mischarged Val-tRNA(Ile). This is Isoleucine--tRNA ligase from Chlamydia trachomatis serovar D (strain ATCC VR-885 / DSM 19411 / UW-3/Cx).